Reading from the N-terminus, the 371-residue chain is N-acetyldiaminopimelate deacetylase (371 aa).

The active site involves D68. Residue E127 is the Proton acceptor of the active site.

The protein belongs to the peptidase M20A family. N-acetyldiaminopimelate deacetylase subfamily.

It catalyses the reaction N-acetyl-(2S,6S)-2,6-diaminopimelate + H2O = (2S,6S)-2,6-diaminopimelate + acetate. It participates in amino-acid biosynthesis; L-lysine biosynthesis via DAP pathway; LL-2,6-diaminopimelate from (S)-tetrahydrodipicolinate (acetylase route): step 3/3. Its function is as follows. Catalyzes the conversion of N-acetyl-diaminopimelate to diaminopimelate and acetate. The polypeptide is N-acetyldiaminopimelate deacetylase (Listeria welshimeri serovar 6b (strain ATCC 35897 / DSM 20650 / CCUG 15529 / CIP 8149 / NCTC 11857 / SLCC 5334 / V8)).